We begin with the raw amino-acid sequence, 424 residues long: Light-independent protochlorophyllide reductase subunit N (424 aa).

Residues C16, C41, and C102 each coordinate [4Fe-4S] cluster.

It belongs to the BchN/ChlN family. Protochlorophyllide reductase is composed of three subunits; ChlL, ChlN and ChlB. Forms a heterotetramer of two ChlB and two ChlN subunits. [4Fe-4S] cluster is required as a cofactor.

It catalyses the reaction chlorophyllide a + oxidized 2[4Fe-4S]-[ferredoxin] + 2 ADP + 2 phosphate = protochlorophyllide a + reduced 2[4Fe-4S]-[ferredoxin] + 2 ATP + 2 H2O. It participates in porphyrin-containing compound metabolism; chlorophyll biosynthesis (light-independent). In terms of biological role, component of the dark-operative protochlorophyllide reductase (DPOR) that uses Mg-ATP and reduced ferredoxin to reduce ring D of protochlorophyllide (Pchlide) to form chlorophyllide a (Chlide). This reaction is light-independent. The NB-protein (ChlN-ChlB) is the catalytic component of the complex. The chain is Light-independent protochlorophyllide reductase subunit N from Synechococcus sp. (strain WH7803).